We begin with the raw amino-acid sequence, 211 residues long: Dephospho-CoA kinase (211 aa).

In terms of domain architecture, DPCK spans Leu-7–Glu-211. Position 15-20 (Gly-15–Val-20) interacts with ATP.

This sequence belongs to the CoaE family.

It is found in the cytoplasm. The catalysed reaction is 3'-dephospho-CoA + ATP = ADP + CoA + H(+). It functions in the pathway cofactor biosynthesis; coenzyme A biosynthesis; CoA from (R)-pantothenate: step 5/5. In terms of biological role, catalyzes the phosphorylation of the 3'-hydroxyl group of dephosphocoenzyme A to form coenzyme A. This is Dephospho-CoA kinase from Treponema pallidum (strain Nichols).